The following is a 463-amino-acid chain: MWKYLHRSVKNEGTVERLTNLNLFTNHRFKFYSTLKEQSFWRIPFKRRSKLQKWVLSTGIVSFIAFNIWWVYWPHHTFPKPVAKILRKGLHSEIKKEGANYQKSLEYYLEALEECKAENVDLLSDEYTGIEIKIGEMYEKLHMYNDATALYGDMLKKFYNELSKTTDKSTKRKFFLLKRDLQILVRFNEINKDSETNATLLIMHLLLAQREFLENSPEFKNVLSKSELLNNQQLDWKNFKGLPFIGKSKPDYQMHLNSKRKQELKIKEPESEQCVFMKELLTARDLYTRYCLNRSNLSGALNSKITTLEWMLLADSPLDDILLAQAELGSIFYLNSEKFEGSLYAIDNEPYKKSEPLELIRSRLQENQNSCLQYSADCYKSIISFANENQYPKVAMESEMDQRILKALSLAHYGIGVINLHKGRLRASKKELKKAIRISEMIRFNELIEEAQRELKKVDGTPI.

The chain crosses the membrane as a helical span at residues 54–74 (WVLSTGIVSFIAFNIWWVYWP). TPR repeat units lie at residues 84–118 (KILRKGLHSEIKKEGANYQKSLEYYLEALEECKAE), 128–161 (TGIEIKIGEMYEKLHMYNDATALYGDMLKKFYNE), 358–389 (ELIRSRLQENQNSCLQYSADCYKSIISFANEN), and 409–442 (SLAHYGIGVINLHKGRLRASKKELKKAIRISEMI).

This sequence belongs to the MGR3 family.

Its subcellular location is the membrane. The chain is Protein MRG3-like from Saccharomyces cerevisiae (strain ATCC 204508 / S288c) (Baker's yeast).